The chain runs to 575 residues: Chaperonin CPN60-1, mitochondrial (575 aa).

A mitochondrion-targeting transit peptide spans methionine 1–tyrosine 32.

The protein belongs to the chaperonin (HSP60) family.

It is found in the mitochondrion. In terms of biological role, implicated in mitochondrial protein import and macromolecular assembly. May facilitate the correct folding of imported proteins. May also prevent misfolding and promote the refolding and proper assembly of unfolded polypeptides generated under stress conditions in the mitochondrial matrix. This Cucurbita maxima (Pumpkin) protein is Chaperonin CPN60-1, mitochondrial (CPN60-1).